The chain runs to 813 residues: Calpain-7 (813 aa).

Methionine 1 carries the post-translational modification N-acetylmethionine. A Phosphothreonine modification is found at threonine 95. The Calpain catalytic domain occupies 232–540 (RERFAYPMPF…YDVIYLSWNP (309 aa)). Catalysis depends on residues cysteine 290, histidine 458, and asparagine 478. Residues 541 to 701 (GLLKESTCIH…INGKWSGQSA (161 aa)) form a domain III region. A domain N region spans residues 702–813 (GGCGNFQETH…VIPIKTTQLQ (112 aa)).

The protein belongs to the peptidase C2 family.

Its subcellular location is the nucleus. Functionally, calcium-regulated non-lysosomal thiol-protease. In Sus scrofa (Pig), this protein is Calpain-7 (CAPN7).